The following is a 423-amino-acid chain: Zinc-type alcohol dehydrogenase-like protein C1198.01 (423 aa).

Residues 14–36 (KQLGHREVSEGSTQPKPDPSGAT) form a disordered region. Residues Cys74, His97, Cys127, Cys130, Cys133, and Cys141 each contribute to the Zn(2+) site.

Belongs to the zinc-containing alcohol dehydrogenase family. Class-III subfamily. Zn(2+) is required as a cofactor.

Its subcellular location is the golgi apparatus. The protein is Zinc-type alcohol dehydrogenase-like protein C1198.01 of Schizosaccharomyces pombe (strain 972 / ATCC 24843) (Fission yeast).